A 496-amino-acid polypeptide reads, in one-letter code: Pituitary adenylate cyclase-activating polypeptide type I receptor (496 aa).

Residues 1–20 (MARTLQLSLTALLLLPMAIA) form the signal peptide. The Extracellular portion of the chain corresponds to 21–152 (MHSDCIFKKE…SGDQDYYYLS (132 aa)). Disulfide bonds link Cys-34-Cys-63, Cys-54-Cys-118, and Cys-77-Cys-134. Residues Asn-48, Asn-60, and Asn-117 are each glycosylated (N-linked (GlcNAc...) asparagine). The interval 125 to 139 (EPFPHYFDACGFDDY) is important for ADCYAP1/PACAP ligand binding and specificity. Residues 125-139 (EPFPHYFDACGFDDY) are important for ligand binding and specificity. A helical membrane pass occupies residues 153-177 (VKALYTVGYSTSLVTLTTAMVILCR). Residues 178-187 (FRKLHCTRNF) lie on the Cytoplasmic side of the membrane. Residues 188 to 208 (IHMNLFVSFMLRAISVFIKDW) traverse the membrane as a helical segment. Residues 209–223 (ILYAEQDSSHCFVST) are Extracellular-facing. The helical transmembrane segment at 224–249 (VECKAVMVFFHYCVVSNYFWLFIEGL) threads the bilayer. A disulfide bridge connects residues Cys-226 and Cys-296. At 250-267 (YLFTLLVETFFPERRYFY) the chain is on the cytoplasmic side. Residues 268–290 (WYTIIGWGTPTVCVTVWAVLRLY) form a helical membrane-spanning segment. Over 291–302 (FDDAGCWDMNDS) the chain is Extracellular. Residues 303–329 (TALWWVIKGPVVGSIMVNFVLFIGIII) traverse the membrane as a helical segment. Residues 330 to 347 (ILVQKLQSPDMGGNESSI) are Cytoplasmic-facing. The helical transmembrane segment at 348–402 (YFSCVQKCYCKPQRAQQHSCKMSELSTITLRLARSTLLLIPLFGIHYTVFAFSPE) threads the bilayer. The Extracellular portion of the chain corresponds to 403–407 (NVSKR). A helical transmembrane segment spans residues 408–431 (ERLVFELGLGSFQGFVVAVLYCFL). Over 432–496 (NGEVQAEIKR…SSLPADNLAT (65 aa)) the chain is Cytoplasmic. Phosphoserine is present on residues Ser-462 and Ser-475.

It belongs to the G-protein coupled receptor 2 family. As to quaternary structure, interacts with maxadilan, a vasodilator peptide from Lutzomyia longipalpis saliva; the interaction results in ADCYAP1R1 activation.

Its subcellular location is the cell membrane. Functionally, g protein-coupled receptor activated by the neuropeptide pituitary adenylate cyclase-activating polypeptide (ADCYAP1/PACAP). Binds both PACAP27 and PACAP38 bioactive peptides. Ligand binding causes a conformation change that triggers signaling via guanine nucleotide-binding proteins (G proteins) and modulates the activity of downstream effectors. Activates cAMP-dependent pathway. May regulate the release of adrenocorticotropin, luteinizing hormone, growth hormone, prolactin, epinephrine, and catecholamine. May play a role in spermatogenesis and sperm motility. Causes smooth muscle relaxation and secretion in the gastrointestinal tract. The polypeptide is Pituitary adenylate cyclase-activating polypeptide type I receptor (Mus musculus (Mouse)).